A 117-amino-acid polypeptide reads, in one-letter code: Putative membrane protein insertion efficiency factor (117 aa).

It belongs to the UPF0161 family.

The protein resides in the cell inner membrane. Its function is as follows. Could be involved in insertion of integral membrane proteins into the membrane. This is Putative membrane protein insertion efficiency factor from Helicobacter pylori (strain ATCC 700392 / 26695) (Campylobacter pylori).